The sequence spans 363 residues: Serpentine receptor class beta-18 (363 aa).

7 helical membrane-spanning segments follow: residues 52 to 72 (LAQF…VVYI), 92 to 112 (MLLF…YHII), 135 to 155 (FRYT…CIYI), 172 to 192 (LILA…IIWV), 218 to 238 (KATI…IGLF), 276 to 296 (AALM…YNFL), and 303 to 323 (TIAT…LVIV).

It belongs to the nematode receptor-like protein srb family.

The protein resides in the membrane. The polypeptide is Serpentine receptor class beta-18 (srb-18) (Caenorhabditis elegans).